The following is a 472-amino-acid chain: Aspartyl/glutamyl-tRNA(Asn/Gln) amidotransferase subunit B (472 aa).

The protein belongs to the GatB/GatE family. GatB subfamily. Heterotrimer of A, B and C subunits.

It catalyses the reaction L-glutamyl-tRNA(Gln) + L-glutamine + ATP + H2O = L-glutaminyl-tRNA(Gln) + L-glutamate + ADP + phosphate + H(+). It carries out the reaction L-aspartyl-tRNA(Asn) + L-glutamine + ATP + H2O = L-asparaginyl-tRNA(Asn) + L-glutamate + ADP + phosphate + 2 H(+). Functionally, allows the formation of correctly charged Asn-tRNA(Asn) or Gln-tRNA(Gln) through the transamidation of misacylated Asp-tRNA(Asn) or Glu-tRNA(Gln) in organisms which lack either or both of asparaginyl-tRNA or glutaminyl-tRNA synthetases. The reaction takes place in the presence of glutamine and ATP through an activated phospho-Asp-tRNA(Asn) or phospho-Glu-tRNA(Gln). The protein is Aspartyl/glutamyl-tRNA(Asn/Gln) amidotransferase subunit B of Campylobacter jejuni subsp. jejuni serotype O:23/36 (strain 81-176).